Consider the following 38-residue polypeptide: Large ribosomal subunit protein bL36 (38 aa).

Belongs to the bacterial ribosomal protein bL36 family.

The chain is Large ribosomal subunit protein bL36 from Ralstonia nicotianae (strain ATCC BAA-1114 / GMI1000) (Ralstonia solanacearum).